A 307-amino-acid chain; its full sequence is Dihydroorotate dehydrogenase B (NAD(+)), catalytic subunit (307 aa).

Residues serine 22 and 46-47 each bind FMN; that span reads KT. Residues lysine 46, 70–74, and asparagine 128 contribute to the substrate site; that span reads NAVGL. Residue asparagine 128 coordinates FMN. Cysteine 131 functions as the Nucleophile in the catalytic mechanism. FMN-binding residues include lysine 166 and isoleucine 192. 193-194 contributes to the substrate binding site; the sequence is NT. Residues glycine 218, 244–245, and 266–267 each bind FMN; these read GG and GT.

This sequence belongs to the dihydroorotate dehydrogenase family. Type 1 subfamily. Heterotetramer of 2 PyrK and 2 PyrD type B subunits. It depends on FMN as a cofactor.

It localises to the cytoplasm. It carries out the reaction (S)-dihydroorotate + NAD(+) = orotate + NADH + H(+). It functions in the pathway pyrimidine metabolism; UMP biosynthesis via de novo pathway; orotate from (S)-dihydroorotate (NAD(+) route): step 1/1. Catalyzes the conversion of dihydroorotate to orotate with NAD(+) as electron acceptor. In Desulforudis audaxviator (strain MP104C), this protein is Dihydroorotate dehydrogenase B (NAD(+)), catalytic subunit (pyrD).